The following is a 165-amino-acid chain: Putative type II restriction enzyme and methyltransferase RM.MpnORF109P N-terminus (165 aa).

Its function is as follows. Corresponds to the N-terminus of a putative G subtype type II restriction/methylase subunit. The sequence is that of Putative type II restriction enzyme and methyltransferase RM.MpnORF109P N-terminus from Mycoplasma pneumoniae (strain ATCC 29342 / M129 / Subtype 1) (Mycoplasmoides pneumoniae).